The sequence spans 357 residues: Inner membrane protein YcfT (357 aa).

The Cytoplasmic segment spans residues 1–12 (MKQKELWINQIK). The helical transmembrane segment at 13–33 (GLCICLVVIYHSVITFYPHLT) threads the bilayer. Residues 34-49 (TFQHPLSEVLSKCWIY) are Periplasmic-facing. The helical transmembrane segment at 50 to 70 (FNLYLAPFRMPVFFFISGYLI) threads the bilayer. Topologically, residues 71-86 (RRYIDSVPWGNCLDKR) are cytoplasmic. Residues 87-107 (IWNIFWVLALWGVVQWLALSA) traverse the membrane as a helical segment. Residues 108 to 135 (LNQWLAPERDLSNASNAAYADSTGEFLH) are Periplasmic-facing. The helical transmembrane segment at 136–156 (GMITASTSLWYLYALIVYFVV) threads the bilayer. Residues 157 to 162 (CKIFSR) are Cytoplasmic-facing. Residues 163–183 (LALPLFALFVLLSVAVNFVPT) traverse the membrane as a helical segment. Residues 184–196 (PWWGMNSVIRNLP) lie on the Periplasmic side of the membrane. A helical membrane pass occupies residues 197-217 (YYSLGAWFGATIMTCVKEVPL). Over 218-231 (RRHLLMASLLTVLA) the chain is Cytoplasmic. Residues 232–252 (VGAWLFTISLLLSLVSIVVIM) form a helical membrane-spanning segment. Topologically, residues 253–310 (KLFYQYEQRFGMRSTSLLNVIGSNTIAIYTTHRILVEIFSLTLLAQMNAARWSPQVEL) are periplasmic. The chain crosses the membrane as a helical span at residues 311–331 (TLLLVYPFVSLFICTVAGLLV). Residues 332–357 (RKLSQRAFSDLLFSPPSLPAAVSYSR) are Cytoplasmic-facing.

It belongs to the acyltransferase 3 family.

It is found in the cell inner membrane. This is Inner membrane protein YcfT (ycfT) from Escherichia coli (strain K12).